Here is a 328-residue protein sequence, read N- to C-terminus: MIFSILEHILTHISFSVVSIVLTIYFLTFLVNLDEIIGFFDSSDKGIVITFFGITGLLFTRWIYSGHFPLSNLYESLIFLSWAFSIIHMISYFNKKQKNHLNAITAPSAIFIQGFATSGLLNKIPESAILVPALQSQWLMMHVSMMILGYGALLCGSLLSIALLVITFRKTGPTFWNKNIKKNNLLTEFFYFDVLYYINERNSILLQQNSNFSFSRNYYRYQLIEQLDYWSFRIISLGFIFLTVGILSGAVWANETWGSYWNWDPKETWAFITWTIFAIFLHIKTNRNVRGINSAIVASTGFLLIWICYFGVNLLGIGLHSYGSFTSN.

The next 8 membrane-spanning stretches (helical) occupy residues 13 to 33, 46 to 66, 73 to 93, 101 to 121, 146 to 166, 234 to 254, 263 to 283, and 295 to 315; these read ISFS…LVNL, GIVI…IYSG, LYES…ISYF, LNAI…SGLL, MILG…LLVI, IISL…VWAN, WDPK…FLHI, and AIVA…VNLL.

Belongs to the CcmF/CycK/Ccl1/NrfE/CcsA family. In terms of assembly, may interact with Ccs1.

Its subcellular location is the plastid. It is found in the chloroplast thylakoid membrane. Its function is as follows. Required during biogenesis of c-type cytochromes (cytochrome c6 and cytochrome f) at the step of heme attachment. This Arabis hirsuta (Hairy rock-cress) protein is Cytochrome c biogenesis protein CcsA.